Consider the following 618-residue polypeptide: Leucine aminopeptidase 2 (618 aa).

A peptide is bound by residues 140–142 and 272–277; these read QCQ and PYGGME. Position 301 (histidine 301) interacts with Zn(2+). Catalysis depends on glutamate 302, which acts as the Proton acceptor. Zn(2+)-binding residues include histidine 305 and glutamate 324. Tyrosine 389 acts as the Proton donor in catalysis.

This sequence belongs to the peptidase M1 family. Zn(2+) is required as a cofactor.

It is found in the cytoplasm. It localises to the nucleus. The enzyme catalyses an epoxide + H2O = an ethanediol. Functionally, aminopeptidase that preferentially cleaves di- and tripeptides. Also has low epoxide hydrolase activity (in vitro). Can hydrolyze the epoxide leukotriene LTA(4) but it forms preferentially 5,6-dihydroxy-7,9,11,14-eicosatetraenoic acid rather than the cytokine leukotriene B(4) as the product compared to the homologous mammalian enzyme (in vitro). The sequence is that of Leucine aminopeptidase 2 from Emericella nidulans (strain FGSC A4 / ATCC 38163 / CBS 112.46 / NRRL 194 / M139) (Aspergillus nidulans).